Consider the following 353-residue polypeptide: Protein MGF 360-13L (353 aa).

The protein belongs to the asfivirus MGF 360 family.

In terms of biological role, plays a role in virus cell tropism, and may be required for efficient virus replication in macrophages. The polypeptide is Protein MGF 360-13L (African swine fever virus (isolate Tick/Malawi/Lil 20-1/1983) (ASFV)).